Consider the following 435-residue polypeptide: S-phase entry cyclin-5 (435 aa).

2 disordered regions span residues 36-70 (KRALSKNDSSSKQQVQDSKPRRALTDVPVNNNPLS) and 104-126 (NDRTAAEQEEEEEEEGEDDDAAS). Over residues 41–52 (KNDSSSKQQVQD) the composition is skewed to low complexity. Residues 110–124 (EQEEEEEEEGEDDDA) show a composition bias toward acidic residues.

Belongs to the cyclin family. Cyclin AB subfamily.

Functionally, required for efficient progression through S phase and possibly for the normal progression through meiosis. Interacts with CDC28. The polypeptide is S-phase entry cyclin-5 (CLB5) (Saccharomyces cerevisiae (strain ATCC 204508 / S288c) (Baker's yeast)).